Reading from the N-terminus, the 234-residue chain is Ribose-5-phosphate isomerase A (234 aa).

Residues 35–38 (SGTT), 91–94 (DGAD), and 105–108 (KGGG) each bind substrate. The Proton acceptor role is filled by E114. K132 is a substrate binding site.

The protein belongs to the ribose 5-phosphate isomerase family. Homodimer.

It carries out the reaction aldehydo-D-ribose 5-phosphate = D-ribulose 5-phosphate. Its pathway is carbohydrate degradation; pentose phosphate pathway; D-ribose 5-phosphate from D-ribulose 5-phosphate (non-oxidative stage): step 1/1. Its function is as follows. Catalyzes the reversible conversion of ribose-5-phosphate to ribulose 5-phosphate. The chain is Ribose-5-phosphate isomerase A from Methanococcus aeolicus (strain ATCC BAA-1280 / DSM 17508 / OCM 812 / Nankai-3).